Consider the following 89-residue polypeptide: Small ribosomal subunit protein uS17 (89 aa).

It belongs to the universal ribosomal protein uS17 family. In terms of assembly, part of the 30S ribosomal subunit.

Functionally, one of the primary rRNA binding proteins, it binds specifically to the 5'-end of 16S ribosomal RNA. The sequence is that of Small ribosomal subunit protein uS17 from Leptospira borgpetersenii serovar Hardjo-bovis (strain JB197).